Reading from the N-terminus, the 150-residue chain is Large ribosomal subunit protein bL9 (150 aa).

This sequence belongs to the bacterial ribosomal protein bL9 family.

In terms of biological role, binds to the 23S rRNA. This is Large ribosomal subunit protein bL9 from Ralstonia nicotianae (strain ATCC BAA-1114 / GMI1000) (Ralstonia solanacearum).